The chain runs to 74 residues: Brevinin-2MT1 (74 aa).

The first 22 residues, 1–22 (MFTMKKSLLVLFFLGTISLSLC), serve as a signal peptide directing secretion. Positions 23–39 (EEERNADEDDGEMTEEE) are cleaved as a propeptide — removed in mature form. Residues cysteine 68 and cysteine 74 are joined by a disulfide bond.

Belongs to the frog skin active peptide (FSAP) family. Brevinin subfamily. In terms of tissue distribution, expressed by the skin glands.

It is found in the secreted. Its function is as follows. Antimicrobial peptide. Active against a variety of Gram-negative and Gram-positive bacterial strains. Active against fungi. Shows hemolytic activity against human erythrocytes. The protein is Brevinin-2MT1 of Amolops mantzorum (Sichuan torrent frog).